The sequence spans 617 residues: MVRPWVFCLLLFPCSSAYSDSWMPLVNLTQHLLQEANSSFSSNCWVCLSIQTQRSLAMPAPLRTWTETPMKLRIMYSARTLSGPYPITDLERRLQNFQPLTPHSSFVNPDQRAIAFLQITSVTGILPILSRITSVRYPDDHVYESAQRPIWGSLSTQTILTSQAPLCISRFFKNSNHATFVGKLPASLCNHTFQLSPSANHQSIDLSSSYAFAPLMAMPGSKWRNPLRFSGPPSLNSGMPHYSCPIDDIHCHTYPTTPWRSCPSFPASTCYNLTLFEPDNSSHPITLSVDTTYFKIKLQGHKDPYPLFQYQPLMGAALSGQYSIWEYEPTVKKNGGITPNIFSHLVSLTYSFCLNSSGVFFLCGNSTYVCLPANWSGVCTLVFQYPDIELLPNNQTISVPLFATVPSSVPASRRKRALPLLPLLAGLGIASALGLGIAGITTSTVYFQQLSKALSDSLDEIATSIISLQDQIDSLAGVVLQNRRALDLIVAERGGTCLFLQEECCFYINQSGVVRHAARKLRERASELGTSSSSWIQWLGLGPWLPSWLTSLMAPILFILVLLVFRPCLLNCLTHSVSRRMSSFIHTTTEGHVDKILLLRESQYKRLPQEPPEEDAV.

The signal sequence occupies residues 1-17 (MVRPWVFCLLLFPCSSA). Topologically, residues 18–544 (YSDSWMPLVN…WIQWLGLGPW (527 aa)) are extracellular. Asn27 carries N-linked (GlcNAc...) asparagine glycosylation. A CXXC motif is present at residues 44–47 (CWVC). 3 disulfides stabilise this stretch: Cys44-Cys47, Cys44-Cys505, and Cys497-Cys504. Asn272 and Asn365 each carry an N-linked (GlcNAc...) asparagine glycan. A fusion peptide region spans residues 420-440 (LLPLLAGLGIASALGLGIAGI). Residues 497-505 (CLFLQEECC) carry the CX6CC motif. Residues 545–565 (LPSWLTSLMAPILFILVLLVF) form a helical membrane-spanning segment. Topologically, residues 566 to 617 (RPCLLNCLTHSVSRRMSSFIHTTTEGHVDKILLLRESQYKRLPQEPPEEDAV) are cytoplasmic.

Belongs to the gamma type-C retroviral envelope protein family. As to quaternary structure, the mature protein consists of a trimer of SU-TM heterodimers. The SU-TM heterodimers are attached by a labile interchain disulfide bond. Post-translationally, synthesized as an inactive precursor that is heavily N-glycosylated and processed likely by furin in the Golgi to yield the mature SU and TM proteins. The cleavage site between SU and TM requires the minimal sequence [KR]-X-[KR]-R. In terms of processing, the CXXC motif is highly conserved across a broad range of retroviral envelope proteins. It is thought to participate in the formation of a labile disulfide bond possibly with the CX6CC motif present in the transmembrane protein. Isomerization of the intersubunit disulfide bond to an SU intrachain disulfide bond is thought to occur upon receptor recognition in order to allow membrane fusion. As to expression, highly expressed in placenta where it localizes to syncytiotrophoblasts of the labyrinthine zona. Specifically localizes to syncytiotrophoblast layer I (SynT-I). Also detected at very low levels in hippocampus, brain, testis and ovary.

Its subcellular location is the cell membrane. Its function is as follows. This endogenous retroviral envelope protein has retained its original fusogenic properties. Together with Synb, participates in trophoblast fusion and the formation of a syncytium during placenta morphogenesis. Syna is essential for placental development and is specifically required for formation of syncytiotrophoblast layer I (SynT-I). Promotes muscle myoblast fusion. Does not have immunosuppressive activity. This is Syncytin-A from Mus musculus (Mouse).